The primary structure comprises 587 residues: Methylcrotonoyl-CoA carboxylase beta chain, mitochondrial (587 aa).

A mitochondrion-targeting transit peptide spans 1–26 (MLRILGRRVVSASKELTSIQQWRIRP). The 257-residue stretch at 68 to 324 (MEGILSELRS…AAKQGMEGTF (257 aa)) folds into the CoA carboxyltransferase N-terminal domain. The interval 68 to 579 (MEGILSELRS…SAALNRPLED (512 aa)) is carboxyltransferase. A CoA carboxyltransferase C-terminal domain is found at 333–579 (EPLYDINELR…SAALNRPLED (247 aa)). The tract at residues 367-396 (EFDEFKKQYGTTLVTGFARIYGQTVGIIGN) is acyl-CoA binding.

Belongs to the AccD/PCCB family. As to quaternary structure, probably a heterodimer composed of biotin-containing alpha subunits and beta subunits. As to expression, in roots, cotyledons, leaves, flowers, ovaries, siliques and embryos.

It localises to the mitochondrion matrix. It catalyses the reaction 3-methylbut-2-enoyl-CoA + hydrogencarbonate + ATP = 3-methyl-(2E)-glutaconyl-CoA + ADP + phosphate + H(+). It functions in the pathway amino-acid degradation; L-leucine degradation; (S)-3-hydroxy-3-methylglutaryl-CoA from 3-isovaleryl-CoA: step 2/3. Its function is as follows. Carboxyltransferase subunit of the 3-methylcrotonyl-CoA carboxylase, an enzyme that catalyzes the conversion of 3-methylcrotonyl-CoA to 3-methylglutaconyl-CoA, a critical step for leucine and isovaleric acid catabolism. This Arabidopsis thaliana (Mouse-ear cress) protein is Methylcrotonoyl-CoA carboxylase beta chain, mitochondrial (MCCB).